Consider the following 761-residue polypeptide: uncharacterized protein (761 aa).

8 TPR repeats span residues 35 to 68, 69 to 102, 103 to 136, 137 to 170, 172 to 203, 204 to 237, 351 to 384, and 419 to 452; these read EEGK…SLNS, AQGL…SDVD, DALY…NPNK, VEIL…KPDF, EAEE…KNPN, EEVY…FPHD, LGVL…NPSA, and ASAG…VKEE. A protein sulfotransferase-like region spans residues 487-761; the sequence is KRPIFVLGMP…PKGLVGYTVG (275 aa).

In the C-terminal section; belongs to the protein sulfotransferase family.

This is an uncharacterized protein from Aquifex aeolicus (strain VF5).